Reading from the N-terminus, the 192-residue chain is Large ribosomal subunit protein uL10 (192 aa).

This sequence belongs to the universal ribosomal protein uL10 family. Part of the ribosomal stalk of the 50S ribosomal subunit. The N-terminus interacts with L11 and the large rRNA to form the base of the stalk. The C-terminus forms an elongated spine to which L12 dimers bind in a sequential fashion forming a multimeric L10(L12)X complex.

Forms part of the ribosomal stalk, playing a central role in the interaction of the ribosome with GTP-bound translation factors. This chain is Large ribosomal subunit protein uL10, found in Gloeobacter violaceus (strain ATCC 29082 / PCC 7421).